The chain runs to 340 residues: Glycerol-3-phosphate dehydrogenase [NAD(P)+] (340 aa).

NADPH-binding residues include Ser13, Tyr14, and Lys108. Positions 108, 137, and 139 each coordinate sn-glycerol 3-phosphate. Ala141 lines the NADPH pocket. Sn-glycerol 3-phosphate-binding residues include Lys193, Asp246, Ser256, Arg257, and Asn258. Catalysis depends on Lys193, which acts as the Proton acceptor. Arg257 is an NADPH binding site. NADPH is bound by residues Ile281 and Glu283.

The protein belongs to the NAD-dependent glycerol-3-phosphate dehydrogenase family.

Its subcellular location is the cytoplasm. The enzyme catalyses sn-glycerol 3-phosphate + NAD(+) = dihydroxyacetone phosphate + NADH + H(+). It catalyses the reaction sn-glycerol 3-phosphate + NADP(+) = dihydroxyacetone phosphate + NADPH + H(+). It functions in the pathway membrane lipid metabolism; glycerophospholipid metabolism. Its function is as follows. Catalyzes the reduction of the glycolytic intermediate dihydroxyacetone phosphate (DHAP) to sn-glycerol 3-phosphate (G3P), the key precursor for phospholipid synthesis. This chain is Glycerol-3-phosphate dehydrogenase [NAD(P)+], found in Bartonella henselae (strain ATCC 49882 / DSM 28221 / CCUG 30454 / Houston 1) (Rochalimaea henselae).